The primary structure comprises 447 residues: Succinate--CoA ligase [ADP-forming] subunit beta, mitochondrial (447 aa).

The transit peptide at 1–34 directs the protein to the mitochondrion; it reads MFKLGRNRALASAFAATSRAPLASRLPSVSQQQR. Positions 45–287 constitute an ATP-grasp domain; sequence ADLLRQYGIG…TTQEDPDEVR (243 aa). Residues Lys82, 89 to 91, and Glu150 contribute to the ATP site; that span reads GRG. Residues Asn242 and Asp256 each coordinate Mg(2+). Substrate-binding positions include Asn307 and 364-366; that span reads GIV.

Belongs to the succinate/malate CoA ligase beta subunit family. In terms of assembly, heterodimer of an alpha and a beta subunit. Mg(2+) serves as cofactor.

The protein resides in the mitochondrion. The enzyme catalyses succinate + ATP + CoA = succinyl-CoA + ADP + phosphate. Its pathway is carbohydrate metabolism; tricarboxylic acid cycle; succinate from succinyl-CoA (ligase route): step 1/1. Functionally, succinyl-CoA synthetase functions in the citric acid cycle (TCA), coupling the hydrolysis of succinyl-CoA to the synthesis of ATP and thus represents the only step of substrate-level phosphorylation in the TCA. The beta subunit provides nucleotide specificity of the enzyme and binds the substrate succinate, while the binding sites for coenzyme A and phosphate are found in the alpha subunit. The protein is Succinate--CoA ligase [ADP-forming] subunit beta, mitochondrial of Neurospora crassa (strain ATCC 24698 / 74-OR23-1A / CBS 708.71 / DSM 1257 / FGSC 987).